Reading from the N-terminus, the 353-residue chain is Photosystem II D2 protein (353 aa).

The residue at position 2 (threonine 2) is an N-acetylthreonine. Residue threonine 2 is modified to Phosphothreonine. A helical transmembrane segment spans residues 41–61 (CAYFALGGWFTGTTFVTSWYT). Residue histidine 118 participates in chlorophyll a binding. The helical transmembrane segment at 125 to 141 (GFMLRQFEIARSVNLRP) threads the bilayer. The pheophytin a site is built by glutamine 130 and asparagine 143. Residues 153–166 (VFVSVFLIYPLGQS) form a helical membrane-spanning segment. Histidine 198 serves as a coordination point for chlorophyll a. The helical transmembrane segment at 208–228 (AALLCAIHGATVENTLFEDGD) threads the bilayer. A plastoquinone is bound by residues histidine 215 and phenylalanine 262. Histidine 215 contributes to the Fe cation binding site. Residue histidine 269 coordinates Fe cation. A helical transmembrane segment spans residues 279 to 295 (GLWMSAIGVVGLALNLR).

It belongs to the reaction center PufL/M/PsbA/D family. In terms of assembly, PSII is composed of 1 copy each of membrane proteins PsbA, PsbB, PsbC, PsbD, PsbE, PsbF, PsbH, PsbI, PsbJ, PsbK, PsbL, PsbM, PsbT, PsbX, PsbY, PsbZ, Psb30/Ycf12, at least 3 peripheral proteins of the oxygen-evolving complex and a large number of cofactors. It forms dimeric complexes. It depends on The D1/D2 heterodimer binds P680, chlorophylls that are the primary electron donor of PSII, and subsequent electron acceptors. It shares a non-heme iron and each subunit binds pheophytin, quinone, additional chlorophylls, carotenoids and lipids. There is also a Cl(-1) ion associated with D1 and D2, which is required for oxygen evolution. The PSII complex binds additional chlorophylls, carotenoids and specific lipids. as a cofactor.

The protein localises to the plastid. Its subcellular location is the chloroplast thylakoid membrane. The enzyme catalyses 2 a plastoquinone + 4 hnu + 2 H2O = 2 a plastoquinol + O2. In terms of biological role, photosystem II (PSII) is a light-driven water:plastoquinone oxidoreductase that uses light energy to abstract electrons from H(2)O, generating O(2) and a proton gradient subsequently used for ATP formation. It consists of a core antenna complex that captures photons, and an electron transfer chain that converts photonic excitation into a charge separation. The D1/D2 (PsbA/PsbD) reaction center heterodimer binds P680, the primary electron donor of PSII as well as several subsequent electron acceptors. D2 is needed for assembly of a stable PSII complex. In Tetradesmus obliquus (Green alga), this protein is Photosystem II D2 protein.